Here is a 457-residue protein sequence, read N- to C-terminus: MVNQENGVDLKSATQSDERKLFIETYGCQMNVADSEVVASIMKMDGYSMTENIEEADAIFVNTCSVRDNAEQKIYGRLQYFQSLKRKKKSLIVGVLGCMAERVKEDLIHVHHADLVVGPDSYLDLPNLVGAVEHGEKAINVELSTQETYKDVIPLKLPGVHISGFVSIMRGCNNFCTYCIVPYTRGRERSRDIESILNEIRDMHEKGFKEVTLLGQNVNSYSFEKEGETITFPILLDRVAKEVPDMRIRFTTSHPKDMSDDTLRVIAANDNICKFIHLPAQSGSSRILKVMNRKYTREWYLDRIAAIRRIVPDCAISTDLFCGFHSETEEDYQETLSLMREVGYDSAFLFKYSERPGTYAASHLEDNVPEEEKVRRLQGMIDLQNKLSEESNLRDIGKTFEVLIEGFSKRSREQLFGRTSQNKVVIFDKKNYHVGQFIKVKIHKASSATLFGEPVEE.

Positions 19-134 (RKLFIETYGC…LPNLVGAVEH (116 aa)) constitute an MTTase N-terminal domain. [4Fe-4S] cluster is bound by residues C28, C64, C98, C172, C176, and C179. In terms of domain architecture, Radical SAM core spans 158 to 390 (PGVHISGFVS…IDLQNKLSEE (233 aa)). One can recognise a TRAM domain in the interval 393–456 (LRDIGKTFEV…SATLFGEPVE (64 aa)).

Belongs to the methylthiotransferase family. MiaB subfamily. Monomer. It depends on [4Fe-4S] cluster as a cofactor.

The protein resides in the cytoplasm. The catalysed reaction is N(6)-dimethylallyladenosine(37) in tRNA + (sulfur carrier)-SH + AH2 + 2 S-adenosyl-L-methionine = 2-methylsulfanyl-N(6)-dimethylallyladenosine(37) in tRNA + (sulfur carrier)-H + 5'-deoxyadenosine + L-methionine + A + S-adenosyl-L-homocysteine + 2 H(+). In terms of biological role, catalyzes the methylthiolation of N6-(dimethylallyl)adenosine (i(6)A), leading to the formation of 2-methylthio-N6-(dimethylallyl)adenosine (ms(2)i(6)A) at position 37 in tRNAs that read codons beginning with uridine. The chain is tRNA-2-methylthio-N(6)-dimethylallyladenosine synthase from Parabacteroides distasonis (strain ATCC 8503 / DSM 20701 / CIP 104284 / JCM 5825 / NCTC 11152).